Consider the following 58-residue polypeptide: Sperm histone P2b (58 aa).

The disordered stretch occupies residues 20-41; that stretch reads LRRRRYRSSRRRRRRPCRRRRH.

Belongs to the protamine P2 family. In terms of tissue distribution, testis.

It is found in the nucleus. It localises to the chromosome. Its function is as follows. Protamines substitute for histones in the chromatin of sperm during the haploid phase of spermatogenesis. They compact sperm DNA into a highly condensed, stable and inactive complex. This chain is Sperm histone P2b, found in Equus caballus (Horse).